The chain runs to 310 residues: Glutaminase (310 aa).

Substrate contacts are provided by Ser-67, Asn-118, Glu-161, Asn-168, Tyr-192, Tyr-244, and Val-262.

Belongs to the glutaminase family. In terms of assembly, homotetramer.

The enzyme catalyses L-glutamine + H2O = L-glutamate + NH4(+). The sequence is that of Glutaminase from Legionella pneumophila (strain Corby).